A 127-amino-acid polypeptide reads, in one-letter code: Fluoride-specific ion channel FluC (127 aa).

4 helical membrane passes run L4–G24, G36–A56, V72–I92, and F101–V121. Positions 76 and 79 each coordinate Na(+).

This sequence belongs to the fluoride channel Fluc/FEX (TC 1.A.43) family.

Its subcellular location is the cell inner membrane. The catalysed reaction is fluoride(in) = fluoride(out). Na(+) is not transported, but it plays an essential structural role and its presence is essential for fluoride channel function. Its function is as follows. Fluoride-specific ion channel. Important for reducing fluoride concentration in the cell, thus reducing its toxicity. This chain is Fluoride-specific ion channel FluC, found in Caulobacter vibrioides (strain ATCC 19089 / CIP 103742 / CB 15) (Caulobacter crescentus).